Reading from the N-terminus, the 685-residue chain is Kinesin-like protein KIP2 (685 aa).

2 disordered regions span residues 11-46 and 63-101; these read EHVGSAGASLPQTPGSRSFALGAHPGPQKRIGGPAQ and SRPSSPYMQASPLLKGSESGGSAGSPQSPDAPSSASGAS. The span at 86-101 shows a compositional bias: low complexity; the sequence is GSPQSPDAPSSASGAS. The Kinesin motor domain occupies 113 to 446; that stretch reads NVSVAIRIKP…VRFASRAKNI (334 aa). 185-192 serves as a coordination point for ATP; that stretch reads GMTGSGKT. 2 coiled-coil regions span residues 464-486 and 520-663; these read IIQNLRKQLDEQHETIVMLRRSA and LEVE…SALS. A disordered region spans residues 485–510; it reads SAAAPSGNGSTSPLDSPGVGGTSLSE.

This sequence belongs to the TRAFAC class myosin-kinesin ATPase superfamily. Kinesin family.

It localises to the cytoplasm. The protein localises to the cytoskeleton. Functionally, required for assembly of the mitotic spindle. The polypeptide is Kinesin-like protein KIP2 (KIP2) (Eremothecium gossypii (strain ATCC 10895 / CBS 109.51 / FGSC 9923 / NRRL Y-1056) (Yeast)).